The sequence spans 59 residues: UPF0434 protein PMI0721 (59 aa).

This sequence belongs to the UPF0434 family.

The chain is UPF0434 protein PMI0721 from Proteus mirabilis (strain HI4320).